We begin with the raw amino-acid sequence, 385 residues long: Protein pelota homolog (385 aa).

It belongs to the eukaryotic release factor 1 family. Pelota subfamily. As to quaternary structure, component of the Pelota-HBS1L complex, also named Dom34-Hbs1 complex, composed of PELO and HBS1L. It depends on a divalent metal cation as a cofactor.

Its subcellular location is the cytoplasm. Component of the Pelota-HBS1L complex, a complex that recognizes stalled ribosomes and triggers the No-Go Decay (NGD) pathway. In the Pelota-HBS1L complex, PELO recognizes ribosomes stalled at the 3' end of an mRNA and engages stalled ribosomes by destabilizing mRNA in the mRNA channel. Following mRNA extraction from stalled ribosomes by the SKI complex, the Pelota-HBS1L complex promotes recruitment of ABCE1, which drives the disassembly of stalled ribosomes, followed by degradation of damaged mRNAs as part of the NGD pathway. The chain is Protein pelota homolog (pelo) from Danio rerio (Zebrafish).